A 229-amino-acid polypeptide reads, in one-letter code: UPF0758 protein Moth_0536 (229 aa).

Residues 107–229 (VIRNPRDVAG…FTSLKERNLL (123 aa)) form the MPN domain. Zn(2+) is bound by residues His178, His180, and Asp191. The JAMM motif signature appears at 178 to 191 (HNHPSGDPTPSQED).

It belongs to the UPF0758 family.

The protein is UPF0758 protein Moth_0536 of Moorella thermoacetica (strain ATCC 39073 / JCM 9320).